The primary structure comprises 179 residues: Warthog protein 3 (179 aa).

The N-terminal stretch at 1–19 (MLYHVEMFTIILLFGFSLA) is a signal peptide. N52 and N147 each carry an N-linked (GlcNAc...) asparagine glycan.

As to expression, expressed in the trinucleate pharyngeal gland cell g1, seam cells and hypodermis.

The protein localises to the secreted. Functionally, intercellular signal essential for a variety of patterning events during development. This Caenorhabditis elegans protein is Warthog protein 3 (wrt-3).